A 538-amino-acid polypeptide reads, in one-letter code: Cytochrome P450 52A4 (538 aa).

The chain crosses the membrane as a helical span at residues 27 to 46 (WYILIPTILLTLNFLSILHT). Position 485 (C485) interacts with heme.

This sequence belongs to the cytochrome P450 family. The cofactor is heme.

The protein resides in the membrane. Functionally, together with an NADPH cytochrome P450 the enzyme system catalyzes the terminal hydroxylation as the first step in the assimilation of alkanes and fatty acids. The protein is Cytochrome P450 52A4 (CYP52A4) of Candida maltosa (Yeast).